The following is a 152-amino-acid chain: Ubiquitin-conjugating enzyme E2 1 (152 aa).

Residues 4–150 (PARKRLMRDF…VRDVVEQSWT (147 aa)) form the UBC core domain. The active-site Glycyl thioester intermediate is the Cys-88. The tract at residues 119–152 (NSPANSEAARMYSESKREYNRRVRDVVEQSWTAD) is disordered. Residues 131-145 (SESKREYNRRVRDVV) are compositionally biased toward basic and acidic residues.

It belongs to the ubiquitin-conjugating enzyme family. As to expression, ubiquitously expressed.

It catalyses the reaction S-ubiquitinyl-[E1 ubiquitin-activating enzyme]-L-cysteine + [E2 ubiquitin-conjugating enzyme]-L-cysteine = [E1 ubiquitin-activating enzyme]-L-cysteine + S-ubiquitinyl-[E2 ubiquitin-conjugating enzyme]-L-cysteine.. Its pathway is protein modification; protein ubiquitination. Accepts the ubiquitin from the E1 complex and catalyzes its covalent attachment to other proteins. This chain is Ubiquitin-conjugating enzyme E2 1 (UBC1), found in Arabidopsis thaliana (Mouse-ear cress).